The sequence spans 123 residues: Small ribosomal subunit protein uS12cz/uS12cy (123 aa).

This sequence belongs to the universal ribosomal protein uS12 family. As to quaternary structure, part of the 30S ribosomal subunit.

The protein resides in the plastid. It is found in the chloroplast. With S4 and S5 plays an important role in translational accuracy. Located at the interface of the 30S and 50S subunits. The chain is Small ribosomal subunit protein uS12cz/uS12cy (rps12-A) from Eucalyptus globulus subsp. globulus (Tasmanian blue gum).